The following is a 529-amino-acid chain: Glucose-6-phosphate isomerase (529 aa).

Glutamate 322 functions as the Proton donor in the catalytic mechanism. Residues histidine 351 and lysine 455 contribute to the active site.

It belongs to the GPI family.

It is found in the cytoplasm. The enzyme catalyses alpha-D-glucose 6-phosphate = beta-D-fructose 6-phosphate. It participates in carbohydrate biosynthesis; gluconeogenesis. It functions in the pathway carbohydrate degradation; glycolysis; D-glyceraldehyde 3-phosphate and glycerone phosphate from D-glucose: step 2/4. In terms of biological role, catalyzes the reversible isomerization of glucose-6-phosphate to fructose-6-phosphate. This is Glucose-6-phosphate isomerase from Thermosynechococcus vestitus (strain NIES-2133 / IAM M-273 / BP-1).